Consider the following 146-residue polypeptide: Hemoglobin subunit beta (146 aa).

Valine 1 carries the N-acetylvaline modification. Residues 2 to 146 (HLTGEEKAAV…VANALAHKYH (145 aa)) enclose the Globin domain. Residue threonine 12 is modified to Phosphothreonine. Serine 44 carries the post-translational modification Phosphoserine. Lysine 59 carries the N6-acetyllysine modification. Position 63 (histidine 63) interacts with heme b. Position 82 is an N6-acetyllysine (lysine 82). Histidine 92 contributes to the heme b binding site. Position 93 is an S-nitrosocysteine (cysteine 93). N6-acetyllysine is present on lysine 144.

Belongs to the globin family. Heterotetramer of two alpha chains and two beta chains. In terms of tissue distribution, red blood cells.

Functionally, involved in oxygen transport from the lung to the various peripheral tissues. This chain is Hemoglobin subunit beta (HBB), found in Mustela putorius furo (European domestic ferret).